The chain runs to 365 residues: Guanine nucleotide-binding protein alpha-6 subunit (365 aa).

Gly2 carries the N-myristoyl glycine lipid modification. The G-alpha domain occupies 42 to 364 (NRFKILLLGT…NENLRSAGLH (323 aa)). The G1 motif stretch occupies residues 45–58 (KILLLGTAESGKST). Residues 50 to 57 (GTAESGKS), 187 to 193 (VHCRIST), 212 to 216 (DVGGQ), 281 to 284 (NKYD), and Ala336 contribute to the GTP site. Positions 57 and 193 each coordinate Mg(2+). A G2 motif region spans residues 185 to 193 (DIVHCRIST). The interval 208–217 (FKMVDVGGQR) is G3 motif. The interval 277–284 (VLFLNKYD) is G4 motif. The interval 334 to 339 (TTATDT) is G5 motif.

This sequence belongs to the G-alpha family. G proteins are composed of 3 units; alpha, beta and gamma. The alpha chain contains the guanine nucleotide binding site.

In terms of biological role, guanine nucleotide-binding proteins (G proteins) are involved as modulators or transducers in various transmembrane signaling systems. This Caenorhabditis briggsae protein is Guanine nucleotide-binding protein alpha-6 subunit (gpa-6).